A 144-amino-acid chain; its full sequence is Small polypeptide DEVIL 18 (144 aa).

Residues 30–58 are compositionally biased toward low complexity; it reads SFSTKTSSSSSKPVFTRSFSTKPTSYSSS. A disordered region spans residues 30–89; sequence SFSTKTSSSSSKPVFTRSFSTKPTSYSSSEPIFRRSFSAKPTSSKSPFLSRSGSTKCPVD. Residues 42-58 form a helical membrane-spanning segment; sequence PVFTRSFSTKPTSYSSS. The span at 68 to 84 shows a compositional bias: polar residues; it reads AKPTSSKSPFLSRSGST. Residues 108–139 form a required for DVL/RTFL small polypeptide activity region; it reads SVTRKCRNMAKEHKSRFYIMKRCVLMLVCWHK.

This sequence belongs to the DVL/RTFL small polypeptides family.

The protein resides in the cell membrane. Functionally, small polypeptide acting as a regulatory molecule which coordinates cellular responses required for differentiation, growth and development, probably by restricting polar cell proliferation in lateral organs and coordinating socket cell recruitment and differentiation at trichome sites. In Arabidopsis thaliana (Mouse-ear cress), this protein is Small polypeptide DEVIL 18.